The chain runs to 332 residues: Ornithine carbamoyltransferase, catabolic (332 aa).

Carbamoyl phosphate contacts are provided by residues 60-63 (STRT), Gln-87, Arg-111, and 138-141 (HPTQ). Residues Asn-170, Asp-230, and 234–235 (SM) contribute to the L-ornithine site. Residues 271–272 (CL) and Arg-316 each bind carbamoyl phosphate.

Belongs to the aspartate/ornithine carbamoyltransferase superfamily. OTCase family.

The protein localises to the cytoplasm. It catalyses the reaction carbamoyl phosphate + L-ornithine = L-citrulline + phosphate + H(+). Its pathway is amino-acid degradation; L-arginine degradation via ADI pathway; carbamoyl phosphate from L-arginine: step 2/2. In terms of biological role, reversibly catalyzes the transfer of the carbamoyl group from carbamoyl phosphate (CP) to the N(epsilon) atom of ornithine (ORN) to produce L-citrulline. The polypeptide is Ornithine carbamoyltransferase, catabolic (Bacillus thuringiensis subsp. konkukian (strain 97-27)).